A 211-amino-acid chain; its full sequence is Thiamine-phosphate synthase (211 aa).

Residues 37-41 (QLRIK) and Asn-69 contribute to the 4-amino-2-methyl-5-(diphosphooxymethyl)pyrimidine site. Mg(2+) contacts are provided by Asp-70 and Asp-89. A 4-amino-2-methyl-5-(diphosphooxymethyl)pyrimidine-binding site is contributed by Ser-108. Residue 134-136 (TQT) participates in 2-[(2R,5Z)-2-carboxy-4-methylthiazol-5(2H)-ylidene]ethyl phosphate binding. Position 137 (Lys-137) interacts with 4-amino-2-methyl-5-(diphosphooxymethyl)pyrimidine. Residues Gly-166 and 186–187 (VS) each bind 2-[(2R,5Z)-2-carboxy-4-methylthiazol-5(2H)-ylidene]ethyl phosphate.

This sequence belongs to the thiamine-phosphate synthase family. Mg(2+) is required as a cofactor.

It carries out the reaction 2-[(2R,5Z)-2-carboxy-4-methylthiazol-5(2H)-ylidene]ethyl phosphate + 4-amino-2-methyl-5-(diphosphooxymethyl)pyrimidine + 2 H(+) = thiamine phosphate + CO2 + diphosphate. The catalysed reaction is 2-(2-carboxy-4-methylthiazol-5-yl)ethyl phosphate + 4-amino-2-methyl-5-(diphosphooxymethyl)pyrimidine + 2 H(+) = thiamine phosphate + CO2 + diphosphate. It catalyses the reaction 4-methyl-5-(2-phosphooxyethyl)-thiazole + 4-amino-2-methyl-5-(diphosphooxymethyl)pyrimidine + H(+) = thiamine phosphate + diphosphate. It participates in cofactor biosynthesis; thiamine diphosphate biosynthesis; thiamine phosphate from 4-amino-2-methyl-5-diphosphomethylpyrimidine and 4-methyl-5-(2-phosphoethyl)-thiazole: step 1/1. In terms of biological role, condenses 4-methyl-5-(beta-hydroxyethyl)thiazole monophosphate (THZ-P) and 2-methyl-4-amino-5-hydroxymethyl pyrimidine pyrophosphate (HMP-PP) to form thiamine monophosphate (TMP). In Salmonella agona (strain SL483), this protein is Thiamine-phosphate synthase.